Here is an 872-residue protein sequence, read N- to C-terminus: Eukaryotic translation initiation factor 3 subunit C (872 aa).

The disordered stretch occupies residues Met1–Phe100. Acidic residues-rich tracts occupy residues Ser16–Glu59 and Ser72–Glu87. A compositionally biased stretch (basic and acidic residues) spans Ala88 to Phe100. In terms of domain architecture, PCI spans Phe613–Glu787. The interval Thr812–Gly872 is disordered. The span at Gly831–Thr848 shows a compositional bias: gly residues.

It belongs to the eIF-3 subunit C family. As to quaternary structure, component of the eukaryotic translation initiation factor 3 (eIF-3) complex.

The protein localises to the cytoplasm. Functionally, component of the eukaryotic translation initiation factor 3 (eIF-3) complex, which is involved in protein synthesis of a specialized repertoire of mRNAs and, together with other initiation factors, stimulates binding of mRNA and methionyl-tRNAi to the 40S ribosome. The eIF-3 complex specifically targets and initiates translation of a subset of mRNAs involved in cell proliferation. The chain is Eukaryotic translation initiation factor 3 subunit C (nip-1) from Neurospora crassa (strain ATCC 24698 / 74-OR23-1A / CBS 708.71 / DSM 1257 / FGSC 987).